Reading from the N-terminus, the 103-residue chain is Small ribosomal subunit protein uS10 (103 aa).

Belongs to the universal ribosomal protein uS10 family. In terms of assembly, part of the 30S ribosomal subunit.

Its function is as follows. Involved in the binding of tRNA to the ribosomes. The sequence is that of Small ribosomal subunit protein uS10 from Escherichia coli O127:H6 (strain E2348/69 / EPEC).